Consider the following 119-residue polypeptide: NADH-quinone oxidoreductase subunit A (119 aa).

The next 3 membrane-spanning stretches (helical) occupy residues 7–27, 63–83, and 88–108; these read FPVLLFLVVGTGLGVALVSIG, LVAILFIIFDLETAFLFPWGV, and IGWPGFLAMMIFLLEFLLGFA.

This sequence belongs to the complex I subunit 3 family. NDH-1 is composed of 14 different subunits. Subunits NuoA, H, J, K, L, M, N constitute the membrane sector of the complex.

It is found in the cell inner membrane. It catalyses the reaction a quinone + NADH + 5 H(+)(in) = a quinol + NAD(+) + 4 H(+)(out). NDH-1 shuttles electrons from NADH, via FMN and iron-sulfur (Fe-S) centers, to quinones in the respiratory chain. The immediate electron acceptor for the enzyme in this species is believed to be ubiquinone. Couples the redox reaction to proton translocation (for every two electrons transferred, four hydrogen ions are translocated across the cytoplasmic membrane), and thus conserves the redox energy in a proton gradient. In Paraburkholderia phytofirmans (strain DSM 17436 / LMG 22146 / PsJN) (Burkholderia phytofirmans), this protein is NADH-quinone oxidoreductase subunit A.